The sequence spans 723 residues: Fatty acid oxidation complex subunit alpha (723 aa).

The interval 1–189 is enoyl-CoA hydratase/isomerase; the sequence is MIYQAETLQV…KIGLLDAVVD (189 aa). Asp-296 lines the substrate pocket. Residues 311-723 are 3-hydroxyacyl-CoA dehydrogenase; that stretch reads NKETQRAAVL…FYGAQQQGSI (413 aa). NAD(+) is bound by residues Met-325, Asp-344, 401 to 403, Lys-408, and Ser-430; that span reads VVE. His-451 acts as the For 3-hydroxyacyl-CoA dehydrogenase activity in catalysis. Asn-454 contributes to the NAD(+) binding site. The substrate site is built by Asn-501 and Tyr-661.

It in the N-terminal section; belongs to the enoyl-CoA hydratase/isomerase family. In the C-terminal section; belongs to the 3-hydroxyacyl-CoA dehydrogenase family. In terms of assembly, heterotetramer of two alpha chains (FadB) and two beta chains (FadA).

It carries out the reaction a (3S)-3-hydroxyacyl-CoA + NAD(+) = a 3-oxoacyl-CoA + NADH + H(+). The enzyme catalyses a (3S)-3-hydroxyacyl-CoA = a (2E)-enoyl-CoA + H2O. The catalysed reaction is a 4-saturated-(3S)-3-hydroxyacyl-CoA = a (3E)-enoyl-CoA + H2O. It catalyses the reaction (3S)-3-hydroxybutanoyl-CoA = (3R)-3-hydroxybutanoyl-CoA. It carries out the reaction a (3Z)-enoyl-CoA = a 4-saturated (2E)-enoyl-CoA. The enzyme catalyses a (3E)-enoyl-CoA = a 4-saturated (2E)-enoyl-CoA. Its pathway is lipid metabolism; fatty acid beta-oxidation. Functionally, involved in the aerobic and anaerobic degradation of long-chain fatty acids via beta-oxidation cycle. Catalyzes the formation of 3-oxoacyl-CoA from enoyl-CoA via L-3-hydroxyacyl-CoA. It can also use D-3-hydroxyacyl-CoA and cis-3-enoyl-CoA as substrate. The chain is Fatty acid oxidation complex subunit alpha from Vibrio vulnificus (strain CMCP6).